Reading from the N-terminus, the 618-residue chain is Leucine aminopeptidase 2 (618 aa).

A peptide-binding positions include 139 to 141 (QCQ) and 271 to 276 (PYGGME). H300 is a Zn(2+) binding site. E301 (proton acceptor) is an active-site residue. Zn(2+) is bound by residues H304 and E323. The active-site Proton donor is the Y388.

This sequence belongs to the peptidase M1 family. Zn(2+) serves as cofactor.

It localises to the cytoplasm. The protein resides in the nucleus. It catalyses the reaction an epoxide + H2O = an ethanediol. Its function is as follows. Aminopeptidase that preferentially cleaves di- and tripeptides. Also has low epoxide hydrolase activity (in vitro). Can hydrolyze the epoxide leukotriene LTA(4) but it forms preferentially 5,6-dihydroxy-7,9,11,14-eicosatetraenoic acid rather than the cytokine leukotriene B(4) as the product compared to the homologous mammalian enzyme (in vitro). This is Leucine aminopeptidase 2 from Aspergillus niger (strain ATCC MYA-4892 / CBS 513.88 / FGSC A1513).